Here is a 118-residue protein sequence, read N- to C-terminus: Evasin P546 (118 aa).

A signal peptide spans 1–21 (MKVLLYIAASCLMLLALNVSA). Intrachain disulfides connect C38/C59, C55/C96, C72/C101, and C91/C110. N45 is a glycosylation site (N-linked (GlcNAc...) asparagine).

Its subcellular location is the secreted. Its function is as follows. Salivary chemokine-binding protein which binds to host chemokines CCL1, CCL3, CCL5 and CCL22. This Amblyomma cajennense (Cayenne tick) protein is Evasin P546.